Here is a 146-residue protein sequence, read N- to C-terminus: Large ribosomal subunit protein uL15 (146 aa).

Positions 1 to 51 (MKLHELQPAAGSRKVRNRVGRGTSSGNGKTSGRGQKGQKARSGGGVRLGFE) are disordered. Composition is skewed to gly residues over residues 23-35 (TSSGNGKTSGRGQ) and 42-51 (SGGGVRLGFE).

Belongs to the universal ribosomal protein uL15 family. Part of the 50S ribosomal subunit.

In terms of biological role, binds to the 23S rRNA. The sequence is that of Large ribosomal subunit protein uL15 from Streptococcus sanguinis (strain SK36).